A 33-amino-acid chain; its full sequence is Mytimycin (33 aa).

The protein resides in the secreted. Has antifungal activity against N.crassa and F.culmorum. The chain is Mytimycin from Mytilus edulis (Blue mussel).